The chain runs to 369 residues: Anhydro-N-acetylmuramic acid kinase (369 aa).

12 to 19 (GTSLDGVD) lines the ATP pocket.

This sequence belongs to the anhydro-N-acetylmuramic acid kinase family.

The enzyme catalyses 1,6-anhydro-N-acetyl-beta-muramate + ATP + H2O = N-acetyl-D-muramate 6-phosphate + ADP + H(+). The protein operates within amino-sugar metabolism; 1,6-anhydro-N-acetylmuramate degradation. It functions in the pathway cell wall biogenesis; peptidoglycan recycling. Catalyzes the specific phosphorylation of 1,6-anhydro-N-acetylmuramic acid (anhMurNAc) with the simultaneous cleavage of the 1,6-anhydro ring, generating MurNAc-6-P. Is required for the utilization of anhMurNAc either imported from the medium or derived from its own cell wall murein, and thus plays a role in cell wall recycling. The sequence is that of Anhydro-N-acetylmuramic acid kinase from Escherichia coli O81 (strain ED1a).